The chain runs to 270 residues: uncharacterized protein (270 aa).

Residues 1-37 (MATHTSKRRIHRWENNELSEENSTIIYFPARGLMWTH) lie on the Cytoplasmic side of the membrane. Residues 38–58 (FPFVLGICLEFVGYVLKIVFI) form a helical membrane-spanning segment. The Extracellular portion of the chain corresponds to 59–65 (NSPSIST). Residues 66-86 (FIAQSVLLLIAPSLYALSIFM) traverse the membrane as a helical segment. Residues 87 to 93 (LFSKMAR) lie on the Cytoplasmic side of the membrane. The helical transmembrane segment at 94-114 (LILMEAYMLIPAKFSTVSFVV) threads the bilayer. The Extracellular segment spans residues 115–140 (ADMIGRVLQAVGGGLLSSWNSRNTGR). The helical transmembrane segment at 141–161 (ILIIVGLFIQIFCYTFLTFSQ) threads the bilayer. At 162–181 (LFLHYKMKATPSKIVRDSNE) the chain is on the cytoplasmic side. Residues 182-202 (WFQYNFILLAGILLVNGRTIV) traverse the membrane as a helical segment. At 203-220 (RVVQFLMGLQSYIGQHEW) the chain is on the extracellular side. A helical transmembrane segment spans residues 221–241 (CLYVFDTVLMFLLPLIFLATF). Residues 242–270 (RARNLFKLQDKSVNIQLNKLLDKESVSED) lie on the Cytoplasmic side of the membrane.

It belongs to the lipid-translocating exporter (LTE) (TC 9.A.26.1) family.

It localises to the membrane. This is an uncharacterized protein from Saccharomyces cerevisiae (strain ATCC 204508 / S288c) (Baker's yeast).